The primary structure comprises 174 residues: Chromophore lyase CpcS/CpeS 1 (174 aa).

This sequence belongs to the CpcS/CpeS biliprotein lyase family.

Covalently attaches a chromophore to Cys residue(s) of phycobiliproteins. The chain is Chromophore lyase CpcS/CpeS 1 from Trichodesmium erythraeum (strain IMS101).